The following is a 374-amino-acid chain: DNA primase small subunit PriS (374 aa).

Active-site residues include D99, D101, and D281.

The protein belongs to the eukaryotic-type primase small subunit family. In terms of assembly, heterodimer of a small subunit (PriS) and a large subunit (PriL). It depends on Mg(2+) as a cofactor. Mn(2+) is required as a cofactor.

In terms of biological role, catalytic subunit of DNA primase, an RNA polymerase that catalyzes the synthesis of short RNA molecules used as primers for DNA polymerase during DNA replication. The small subunit contains the primase catalytic core and has DNA synthesis activity on its own. Binding to the large subunit stabilizes and modulates the activity, increasing the rate of DNA synthesis while decreasing the length of the DNA fragments, and conferring RNA synthesis capability. The DNA polymerase activity may enable DNA primase to also catalyze primer extension after primer synthesis. May also play a role in DNA repair. This Methanoregula boonei (strain DSM 21154 / JCM 14090 / 6A8) protein is DNA primase small subunit PriS.